The chain runs to 539 residues: Chaperonin GroEL (539 aa).

ATP contacts are provided by residues 29 to 32 (TIGP), 86 to 90 (DGTTT), Gly413, 476 to 478 (NAA), and Asp492.

It belongs to the chaperonin (HSP60) family. As to quaternary structure, forms a cylinder of 14 subunits composed of two heptameric rings stacked back-to-back. Interacts with the co-chaperonin GroES.

It localises to the cytoplasm. The enzyme catalyses ATP + H2O + a folded polypeptide = ADP + phosphate + an unfolded polypeptide.. In terms of biological role, together with its co-chaperonin GroES, plays an essential role in assisting protein folding. The GroEL-GroES system forms a nano-cage that allows encapsulation of the non-native substrate proteins and provides a physical environment optimized to promote and accelerate protein folding. The protein is Chaperonin GroEL of Staphylococcus epidermidis.